Reading from the N-terminus, the 572-residue chain is Urease subunit alpha (572 aa).

A Urease domain is found at 136–572; that stretch reads GGIDTHIHFI…VPLGQRYFLF (437 aa). Residues H141, H143, and K224 each coordinate Ni(2+). An N6-carboxylysine modification is found at K224. H226 lines the substrate pocket. Positions 253 and 279 each coordinate Ni(2+). The Proton donor role is filled by H327. D367 is a binding site for Ni(2+).

This sequence belongs to the metallo-dependent hydrolases superfamily. Urease alpha subunit family. In terms of assembly, heterotrimer of UreA (gamma), UreB (beta) and UreC (alpha) subunits. Three heterotrimers associate to form the active enzyme. It depends on Ni cation as a cofactor. Post-translationally, carboxylation allows a single lysine to coordinate two nickel ions.

The protein resides in the cytoplasm. It catalyses the reaction urea + 2 H2O + H(+) = hydrogencarbonate + 2 NH4(+). It functions in the pathway nitrogen metabolism; urea degradation; CO(2) and NH(3) from urea (urease route): step 1/1. This Haemophilus influenzae (strain 86-028NP) protein is Urease subunit alpha.